The sequence spans 404 residues: Zinc transporter 10 (404 aa).

The N-terminal stretch at 1 to 22 (MESSSSSSYIPFIRQIAASVSA) is a signal peptide. Residues 23–49 (ASCDAVVGGGGDKDEECRDEAAALRLK) are Extracellular-facing. Residues 50 to 70 (MVAVAAILIAGAAGVAIPLVG) form a helical membrane-spanning segment. Topologically, residues 71 to 86 (RRRRGGGGGGGGGASS) are cytoplasmic. Residues 87–107 (GGLFVLAKAFAAGVILATGFV) form a helical membrane-spanning segment. Over 108–129 (HMLHDAEHALSNPCLPHSPWRR) the chain is Extracellular. Residues 130–150 (FPFPGFVAMLAALATLVVDFV) form a helical membrane-spanning segment. Topologically, residues 151–248 (GTHFYERKHR…GHEEGPSARH (98 aa)) are cytoplasmic. Residues 249–269 (VVVSQILELGIVSHSVIIGLS) traverse the membrane as a helical segment. At 270–280 (LGVSQSPCTIK) the chain is on the extracellular side. A helical transmembrane segment spans residues 281–301 (PLVAALSFHQFFEGFALGGCI). The Cytoplasmic segment spans residues 302–311 (SEAQLKNFSA). The chain crosses the membrane as a helical span at residues 312 to 332 (FLMAFFFAITTPAGITVGAAV). Residues 333–343 (ASFYNPNSPRA) lie on the Extracellular side of the membrane. The chain crosses the membrane as a helical span at residues 344 to 364 (LVVEGILDSMSAGILIYMALV). The Cytoplasmic portion of the chain corresponds to 365-383 (DLIAADFLSRKMSCNPRLQ). Residues 384 to 404 (VGSYIALFLGAMAMAALALWA) traverse the membrane as a helical segment.

This sequence belongs to the ZIP transporter (TC 2.A.5) family.

Its subcellular location is the cell membrane. In terms of biological role, zinc transporter that may be involved in zinc uptake from the rhizosphere. This chain is Zinc transporter 10 (ZIP10), found in Oryza sativa subsp. japonica (Rice).